The following is a 282-amino-acid chain: HTH-type transcriptional activator RhaR (282 aa).

The HTH araC/xylS-type domain maps to 179–277 (DKLITRLAAS…GMTPSQWRHL (99 aa)). 2 consecutive DNA-binding regions (H-T-H motif) follow at residues 196–217 (DKFC…RQQT) and 244–267 (ISDI…TRET).

Binds DNA as a dimer.

It localises to the cytoplasm. Its function is as follows. Activates expression of the rhaSR operon in response to L-rhamnose. This Escherichia coli O139:H28 (strain E24377A / ETEC) protein is HTH-type transcriptional activator RhaR.